The primary structure comprises 467 residues: Uronate isomerase (467 aa).

The protein belongs to the metallo-dependent hydrolases superfamily. Uronate isomerase family.

The enzyme catalyses D-glucuronate = D-fructuronate. It carries out the reaction aldehydo-D-galacturonate = keto-D-tagaturonate. It functions in the pathway carbohydrate metabolism; pentose and glucuronate interconversion. The sequence is that of Uronate isomerase from Clostridium acetobutylicum (strain ATCC 824 / DSM 792 / JCM 1419 / IAM 19013 / LMG 5710 / NBRC 13948 / NRRL B-527 / VKM B-1787 / 2291 / W).